The chain runs to 206 residues: Small ribosomal subunit protein uS4 (206 aa).

Positions 18–45 (NIWGRPKSPVNRREYGPGQHGQRRKGKM) are disordered. The S4 RNA-binding domain maps to 94 to 157 (RRLDAVVYRA…KQLASVLEAV (64 aa)).

The protein belongs to the universal ribosomal protein uS4 family. Part of the 30S ribosomal subunit. Contacts protein S5. The interaction surface between S4 and S5 is involved in control of translational fidelity.

One of the primary rRNA binding proteins, it binds directly to 16S rRNA where it nucleates assembly of the body of the 30S subunit. Functionally, with S5 and S12 plays an important role in translational accuracy. The protein is Small ribosomal subunit protein uS4 of Ruegeria pomeroyi (strain ATCC 700808 / DSM 15171 / DSS-3) (Silicibacter pomeroyi).